Here is a 134-residue protein sequence, read N- to C-terminus: MKLKGKGIGKVVVEGEVIVSRKPLSFLGGVDPETGTITDPESDIKGESITGKILVFPKGKGSTVGSYILYALSKNGKGPKAIIVEEAEPIVTAGAIISGIPLITNVDISKLKTGMRVRINPQEGEVEILAEGNL.

The active-site Proton acceptor is Ser62.

Belongs to the AcnX type II small subunit family. As to quaternary structure, heterodimer composed of a large subunit (PMDh-L) and a small subunit (PMDh-S).

The enzyme catalyses (R)-5-phosphomevalonate = (2E)-3-methyl-5-phosphooxypent-2-enoate + H2O. It functions in the pathway isoprenoid biosynthesis; isopentenyl diphosphate biosynthesis via mevalonate pathway. Its function is as follows. Component of a hydro-lyase that catalyzes the dehydration of mevalonate 5-phosphate (MVA5P) to form trans-anhydromevalonate 5-phosphate (tAHMP). Involved in the archaeal mevalonate (MVA) pathway, which provides fundamental precursors for isoprenoid biosynthesis, such as isopentenyl diphosphate (IPP) and dimethylallyl diphosphate (DMAPP). The chain is Phosphomevalonate dehydratase small subunit from Pyrococcus horikoshii (strain ATCC 700860 / DSM 12428 / JCM 9974 / NBRC 100139 / OT-3).